The sequence spans 382 residues: Chaperone protein DnaJ (382 aa).

The region spanning Asp-5–Gly-70 is the J domain. The CR-type zinc-finger motif lies at Gly-146 to Thr-224. Zn(2+)-binding residues include Cys-159, Cys-162, Cys-176, Cys-179, Cys-198, Cys-201, Cys-212, and Cys-215. 4 CXXCXGXG motif repeats span residues Cys-159–Gly-166, Cys-176–Gly-183, Cys-198–Gly-205, and Cys-212–Gly-219. A disordered region spans residues Arg-230–Gly-250.

It belongs to the DnaJ family. As to quaternary structure, homodimer. It depends on Zn(2+) as a cofactor.

Its subcellular location is the cytoplasm. Its function is as follows. Participates actively in the response to hyperosmotic and heat shock by preventing the aggregation of stress-denatured proteins and by disaggregating proteins, also in an autonomous, DnaK-independent fashion. Unfolded proteins bind initially to DnaJ; upon interaction with the DnaJ-bound protein, DnaK hydrolyzes its bound ATP, resulting in the formation of a stable complex. GrpE releases ADP from DnaK; ATP binding to DnaK triggers the release of the substrate protein, thus completing the reaction cycle. Several rounds of ATP-dependent interactions between DnaJ, DnaK and GrpE are required for fully efficient folding. Also involved, together with DnaK and GrpE, in the DNA replication of plasmids through activation of initiation proteins. The polypeptide is Chaperone protein DnaJ (Opitutus terrae (strain DSM 11246 / JCM 15787 / PB90-1)).